A 423-amino-acid chain; its full sequence is ATP-dependent Clp protease ATP-binding subunit ClpX (423 aa).

A ClpX-type ZB domain is found at 1–50 (MTDDTEYRCSFCGKEHHQVDDLIAGPDVRICSECVVLSCEIVEDRRNEAL). Cys-9, Cys-12, Cys-31, and Cys-34 together coordinate Zn(2+). 126–133 (PTGCGKTY) serves as a coordination point for ATP.

The protein belongs to the ClpX chaperone family. In terms of assembly, component of the ClpX-ClpP complex. Forms a hexameric ring that, in the presence of ATP, binds to fourteen ClpP subunits assembled into a disk-like structure with a central cavity, resembling the structure of eukaryotic proteasomes.

Functionally, ATP-dependent specificity component of the Clp protease. It directs the protease to specific substrates. Can perform chaperone functions in the absence of ClpP. In Tropheryma whipplei (strain TW08/27) (Whipple's bacillus), this protein is ATP-dependent Clp protease ATP-binding subunit ClpX.